We begin with the raw amino-acid sequence, 436 residues long: Tol-Pal system protein TolB (436 aa).

An N-terminal signal peptide occupies residues 1–28 (MRSFLKPLLTIAAMALGMTAVIPMPAWA).

This sequence belongs to the TolB family. As to quaternary structure, the Tol-Pal system is composed of five core proteins: the inner membrane proteins TolA, TolQ and TolR, the periplasmic protein TolB and the outer membrane protein Pal. They form a network linking the inner and outer membranes and the peptidoglycan layer.

It localises to the periplasm. In terms of biological role, part of the Tol-Pal system, which plays a role in outer membrane invagination during cell division and is important for maintaining outer membrane integrity. The polypeptide is Tol-Pal system protein TolB (Mesorhizobium japonicum (strain LMG 29417 / CECT 9101 / MAFF 303099) (Mesorhizobium loti (strain MAFF 303099))).